The sequence spans 422 residues: Golgi-associated RAB2 interactor protein 2 (422 aa).

Residues 353 to 404 (PVESEANTSKEMKDKTSEEKMPDFQSTALKAEESRSLRTESNTSVLSPHIKS) form a disordered region. Positions 360-374 (TSKEMKDKTSEEKMP) are enriched in basic and acidic residues.

The protein belongs to the GARIN family. As to quaternary structure, interacts with CALM1. In terms of tissue distribution, expressed in spermatozoa (at protein level).

The protein resides in the cell projection. The protein localises to the cilium. It is found in the flagellum. Seems to play a role in sperm motility. The polypeptide is Golgi-associated RAB2 interactor protein 2 (Homo sapiens (Human)).